A 304-amino-acid chain; its full sequence is tRNA-uridine aminocarboxypropyltransferase 1 (304 aa).

Residues 1–30 (MALSPSVVPQESEENNANCVETKQSQTAST) form a disordered region. Positions 15–30 (NNANCVETKQSQTAST) are enriched in polar residues. Positions 206–209 (DSTW) match the DXTW motif.

The protein belongs to the TDD superfamily. DTWD1 family.

Its subcellular location is the nucleus. The catalysed reaction is a uridine in tRNA + S-adenosyl-L-methionine = a 3-[(3S)-3-amino-3-carboxypropyl]uridine in tRNA + S-methyl-5'-thioadenosine + H(+). In terms of biological role, catalyzes the formation of 3-(3-amino-3-carboxypropyl)uridine (acp3U) at position 20 in the D-loop of several cytoplasmic tRNAs (acp3U(20)). This is tRNA-uridine aminocarboxypropyltransferase 1 from Rattus norvegicus (Rat).